Here is a 152-residue protein sequence, read N- to C-terminus: 6,7-dimethyl-8-ribityllumazine synthase (152 aa).

5-amino-6-(D-ribitylamino)uracil-binding positions include F22, 54–56, and 78–80; these read AFE and AVI. 83–84 serves as a coordination point for (2S)-2-hydroxy-3-oxobutyl phosphate; that stretch reads ET. The active-site Proton donor is the H86. F111 is a binding site for 5-amino-6-(D-ribitylamino)uracil. Residue R125 coordinates (2S)-2-hydroxy-3-oxobutyl phosphate.

Belongs to the DMRL synthase family.

The catalysed reaction is (2S)-2-hydroxy-3-oxobutyl phosphate + 5-amino-6-(D-ribitylamino)uracil = 6,7-dimethyl-8-(1-D-ribityl)lumazine + phosphate + 2 H2O + H(+). The protein operates within cofactor biosynthesis; riboflavin biosynthesis; riboflavin from 2-hydroxy-3-oxobutyl phosphate and 5-amino-6-(D-ribitylamino)uracil: step 1/2. In terms of biological role, catalyzes the formation of 6,7-dimethyl-8-ribityllumazine by condensation of 5-amino-6-(D-ribitylamino)uracil with 3,4-dihydroxy-2-butanone 4-phosphate. This is the penultimate step in the biosynthesis of riboflavin. The protein is 6,7-dimethyl-8-ribityllumazine synthase of Limosilactobacillus reuteri (strain DSM 20016) (Lactobacillus reuteri).